Here is a 26-residue protein sequence, read N- to C-terminus: Ribulose bisphosphate carboxylase large chain (26 aa).

The propeptide occupies 1 to 2; the sequence is MS. The residue at position 3 (Pro-3) is an N-acetylproline.

Belongs to the RuBisCO large chain family. Type I subfamily. In terms of assembly, heterohexadecamer of 8 large chains and 8 small chains.

The protein resides in the plastid. It localises to the chloroplast. The enzyme catalyses 2 (2R)-3-phosphoglycerate + 2 H(+) = D-ribulose 1,5-bisphosphate + CO2 + H2O. It catalyses the reaction D-ribulose 1,5-bisphosphate + O2 = 2-phosphoglycolate + (2R)-3-phosphoglycerate + 2 H(+). Functionally, ruBisCO catalyzes two reactions: the carboxylation of D-ribulose 1,5-bisphosphate, the primary event in carbon dioxide fixation, as well as the oxidative fragmentation of the pentose substrate in the photorespiration process. Both reactions occur simultaneously and in competition at the same active site. The protein is Ribulose bisphosphate carboxylase large chain (rbcL) of Vicia faba (Broad bean).